The following is a 347-amino-acid chain: Inositol 2-dehydrogenase (347 aa).

It belongs to the Gfo/Idh/MocA family. Homotetramer.

The catalysed reaction is myo-inositol + NAD(+) = scyllo-inosose + NADH + H(+). Involved in the oxidation of myo-inositol (MI) to 2-keto-myo-inositol (2KMI or 2-inosose). The sequence is that of Inositol 2-dehydrogenase from Rubrobacter xylanophilus (strain DSM 9941 / JCM 11954 / NBRC 16129 / PRD-1).